A 445-amino-acid polypeptide reads, in one-letter code: UPF0210 protein SPG_0223 (445 aa).

It belongs to the UPF0210 family. In terms of assembly, homodimer.

This is UPF0210 protein SPG_0223 from Streptococcus pneumoniae serotype 19F (strain G54).